A 435-amino-acid polypeptide reads, in one-letter code: UPF0761 membrane protein mma_2179 (435 aa).

6 helical membrane-spanning segments follow: residues 45-65, 103-123, 142-162, 177-197, 208-228, and 252-272; these read VLAL…FPLF, LSAF…LMID, ILVY…SMTF, VPFV…MVAF, LVEW…FEIV, and FPIF…GAVV.

This sequence belongs to the UPF0761 family.

The protein resides in the cell inner membrane. The protein is UPF0761 membrane protein mma_2179 of Janthinobacterium sp. (strain Marseille) (Minibacterium massiliensis).